A 404-amino-acid chain; its full sequence is Putative aspartate aminotransferase, cytoplasmic 2 (404 aa).

Position 249 is an N6-(pyridoxal phosphate)lysine (lysine 249).

It belongs to the class-I pyridoxal-phosphate-dependent aminotransferase family. Homodimer. Requires pyridoxal 5'-phosphate as cofactor.

The protein resides in the cytoplasm. It catalyses the reaction L-aspartate + 2-oxoglutarate = oxaloacetate + L-glutamate. The chain is Putative aspartate aminotransferase, cytoplasmic 2 (Got1l1) from Mus musculus (Mouse).